Reading from the N-terminus, the 904-residue chain is Alanine--tRNA ligase (904 aa).

The Zn(2+) site is built by His-594, His-598, Cys-695, and His-699.

It belongs to the class-II aminoacyl-tRNA synthetase family. Zn(2+) serves as cofactor.

It is found in the cytoplasm. The catalysed reaction is tRNA(Ala) + L-alanine + ATP = L-alanyl-tRNA(Ala) + AMP + diphosphate. Its function is as follows. Catalyzes the attachment of alanine to tRNA(Ala) in a two-step reaction: alanine is first activated by ATP to form Ala-AMP and then transferred to the acceptor end of tRNA(Ala). Also edits incorrectly charged Ser-tRNA(Ala) and Gly-tRNA(Ala) via its editing domain. The sequence is that of Alanine--tRNA ligase from Anaeromyxobacter sp. (strain Fw109-5).